The chain runs to 150 residues: S-protein homolog 3 (150 aa).

A signal peptide spans 1 to 23; the sequence is MKNILKTQVHVVVIYLLIKIAFS. Residues asparagine 32 and asparagine 70 are each glycosylated (N-linked (GlcNAc...) asparagine).

This sequence belongs to the plant self-incompatibility (S1) protein family.

It localises to the secreted. The sequence is that of S-protein homolog 3 from Arabidopsis thaliana (Mouse-ear cress).